We begin with the raw amino-acid sequence, 178 residues long: Histone deacetylase complex subunit SAP30L (178 aa).

2 cysteine pairs are disulfide-bonded: cysteine 24-cysteine 25 and cysteine 33-cysteine 69. An Atypical zinc finger spans residues 24 to 72 (CCLIEDAERCGRPAGNASFSKRIQKSISQRKLKLDIDKSVRHLYICDFH). The interval 80 to 99 (RNKRKRKTSDDGGESPDHEV) is disordered. Positions 81–86 (NKRKRK) match the Nuclear localization signal (NLS) motif. The important for DNA and phosphoinositide binding stretch occupies residues 83 to 85 (RKR).

The protein belongs to the SAP30 family. In terms of assembly, interacts with components of the histone deacetylase complex sin3a, hdac1 and hdac2. Binds histones and nucleosomes. Detected in embryos at 2dpf (at protein level). Widely expressed during embryogenesis and in adults.

It is found in the nucleus. It localises to the nucleolus. Functionally, functions as a transcription repressor, probably via its interaction with histone deacetylase complexes. Required for normal expression of numerous target genes. Involved in the functional recruitment of the class 1 Sin3-histone deacetylase complex (HDAC) to the nucleolus. Binds DNA, apparently without sequence-specificity, and bends bound double-stranded DNA. Binds phosphoinositol phosphates (phosphoinositol 3-phosphate, phosphoinositol 4-phosphate and phosphoinositol 5-phosphate) via the same basic sequence motif that mediates DNA binding and nuclear import. This Danio rerio (Zebrafish) protein is Histone deacetylase complex subunit SAP30L (sap30l).